The chain runs to 155 residues: MSKASVYEAKTESFIQPILDSMNFELVDVEYVKEGGMNYLRAYIDKEGGITVDDCEVVARQMNEILDREDYIPDSYTFEVSSPGLGRPLKKEKDYVRNMNKEIEIRTYRAINKSKEFYGLLKAYDKDTVTITDEDGNETTFNKSDIALIRQALDF.

The protein belongs to the RimP family.

It is found in the cytoplasm. Required for maturation of 30S ribosomal subunits. In Agathobacter rectalis (strain ATCC 33656 / DSM 3377 / JCM 17463 / KCTC 5835 / VPI 0990) (Eubacterium rectale), this protein is Ribosome maturation factor RimP.